The chain runs to 63 residues: UPF0434 protein Mmar10_2939 (63 aa).

This sequence belongs to the UPF0434 family.

This Maricaulis maris (strain MCS10) (Caulobacter maris) protein is UPF0434 protein Mmar10_2939.